A 206-amino-acid polypeptide reads, in one-letter code: Synaptosomal-associated protein 25 (206 aa).

A compositionally biased stretch (basic and acidic residues) spans 1-20; sequence MAEDADMRNELEEMQRRADQ. The interval 1-23 is disordered; the sequence is MAEDADMRNELEEMQRRADQLAD. The t-SNARE coiled-coil homology 1 domain maps to 19 to 81; the sequence is DQLADESLES…KEAEKNLTDL (63 aa). Residues C85, C88, C90, and C92 are each lipidated (S-palmitoyl cysteine). T138 carries the phosphothreonine modification. The t-SNARE coiled-coil homology 2 domain maps to 140–202; it reads DARENEMDEN…DEANQRATKM (63 aa). Residue S187 is modified to Phosphoserine.

Belongs to the SNAP-25 family. In terms of assembly, part of the SNARE core complex containing SNAP25, VAMP2 and STX1A. This complex binds CPLX1. Interacts with TRIM9, RIMS1 and SNAPIN. Binds STXBP6. Found in a ternary complex with STX1A and VAMP8. Associates with the BLOC-1 complex. Isoform 1 and isoform 2 interact with BLOC1S6. Interacts with alpha-synuclein/SNCA. Palmitoylated. Cys-85 appears to be the main site, and palmitoylation is required for membrane association.

It localises to the membrane. The protein localises to the synapse. Its subcellular location is the synaptosome. The protein resides in the cell membrane. T-SNARE involved in the molecular regulation of neurotransmitter release. May play an important role in the synaptic function of specific neuronal systems. Associates with proteins involved in vesicle docking and membrane fusion. The chain is Synaptosomal-associated protein 25 (SNAP25) from Gallus gallus (Chicken).